Here is a 366-residue protein sequence, read N- to C-terminus: S-adenosylmethionine:tRNA ribosyltransferase-isomerase (366 aa).

Belongs to the QueA family. As to quaternary structure, monomer.

The protein localises to the cytoplasm. It catalyses the reaction 7-aminomethyl-7-carbaguanosine(34) in tRNA + S-adenosyl-L-methionine = epoxyqueuosine(34) in tRNA + adenine + L-methionine + 2 H(+). It participates in tRNA modification; tRNA-queuosine biosynthesis. Its function is as follows. Transfers and isomerizes the ribose moiety from AdoMet to the 7-aminomethyl group of 7-deazaguanine (preQ1-tRNA) to give epoxyqueuosine (oQ-tRNA). The protein is S-adenosylmethionine:tRNA ribosyltransferase-isomerase of Agrobacterium fabrum (strain C58 / ATCC 33970) (Agrobacterium tumefaciens (strain C58)).